Consider the following 294-residue polypeptide: 4-hydroxy-tetrahydrodipicolinate synthase (294 aa).

Threonine 47 contacts pyruvate. Tyrosine 135 functions as the Proton donor/acceptor in the catalytic mechanism. Catalysis depends on lysine 163, which acts as the Schiff-base intermediate with substrate. Position 205 (threonine 205) interacts with pyruvate.

The protein belongs to the DapA family. In terms of assembly, homotetramer; dimer of dimers.

Its subcellular location is the cytoplasm. The enzyme catalyses L-aspartate 4-semialdehyde + pyruvate = (2S,4S)-4-hydroxy-2,3,4,5-tetrahydrodipicolinate + H2O + H(+). It functions in the pathway amino-acid biosynthesis; L-lysine biosynthesis via DAP pathway; (S)-tetrahydrodipicolinate from L-aspartate: step 3/4. Catalyzes the condensation of (S)-aspartate-beta-semialdehyde [(S)-ASA] and pyruvate to 4-hydroxy-tetrahydrodipicolinate (HTPA). The protein is 4-hydroxy-tetrahydrodipicolinate synthase of Rickettsia conorii (strain ATCC VR-613 / Malish 7).